The following is a 529-amino-acid chain: Bifunctional purine biosynthesis protein PurH (529 aa).

One can recognise an MGS-like domain in the interval P8 to T158.

This sequence belongs to the PurH family.

The enzyme catalyses (6R)-10-formyltetrahydrofolate + 5-amino-1-(5-phospho-beta-D-ribosyl)imidazole-4-carboxamide = 5-formamido-1-(5-phospho-D-ribosyl)imidazole-4-carboxamide + (6S)-5,6,7,8-tetrahydrofolate. It carries out the reaction IMP + H2O = 5-formamido-1-(5-phospho-D-ribosyl)imidazole-4-carboxamide. The protein operates within purine metabolism; IMP biosynthesis via de novo pathway; 5-formamido-1-(5-phospho-D-ribosyl)imidazole-4-carboxamide from 5-amino-1-(5-phospho-D-ribosyl)imidazole-4-carboxamide (10-formyl THF route): step 1/1. It functions in the pathway purine metabolism; IMP biosynthesis via de novo pathway; IMP from 5-formamido-1-(5-phospho-D-ribosyl)imidazole-4-carboxamide: step 1/1. This Caulobacter vibrioides (strain ATCC 19089 / CIP 103742 / CB 15) (Caulobacter crescentus) protein is Bifunctional purine biosynthesis protein PurH.